A 156-amino-acid chain; its full sequence is Anaerobic ribonucleoside-triphosphate reductase-activating protein (156 aa).

Positions 26, 30, and 33 each coordinate [4Fe-4S] cluster. Residues 32–34 (GCY) and Gly72 contribute to the S-adenosyl-L-methionine site.

It belongs to the organic radical-activating enzymes family. Forms a tetramer composed of two NrdD and two NrdG subunits. It depends on [4Fe-4S] cluster as a cofactor.

The enzyme catalyses glycyl-[protein] + reduced [flavodoxin] + S-adenosyl-L-methionine = glycin-2-yl radical-[protein] + semiquinone [flavodoxin] + 5'-deoxyadenosine + L-methionine + H(+). In terms of biological role, activation of anaerobic ribonucleoside-triphosphate reductase under anaerobic conditions by generation of an organic free radical, using S-adenosylmethionine and reduced flavodoxin as cosubstrates to produce 5'-deoxy-adenosine. The chain is Anaerobic ribonucleoside-triphosphate reductase-activating protein (NRDG) from Escherichia coli (Bacteriophage T4).